The chain runs to 81 residues: Photosystem I iron-sulfur center (81 aa).

4Fe-4S ferredoxin-type domains follow at residues 2–31 and 39–68; these read SHAVKIYDTCIGCTQCVRACPLDVLEMVPW and IASSPRTEDCVGCKRCETACPTDFLSIRVY. Residues Cys-11, Cys-14, Cys-17, Cys-21, Cys-48, Cys-51, Cys-54, and Cys-58 each contribute to the [4Fe-4S] cluster site.

In terms of assembly, the cyanobacterial PSI reaction center is composed of one copy each of PsaA,B,C,D,E,F,I,J,K,L,M and X, and forms trimeric complexes. It depends on [4Fe-4S] cluster as a cofactor.

The protein resides in the cellular thylakoid membrane. The catalysed reaction is reduced [plastocyanin] + hnu + oxidized [2Fe-2S]-[ferredoxin] = oxidized [plastocyanin] + reduced [2Fe-2S]-[ferredoxin]. Its function is as follows. Apoprotein for the two 4Fe-4S centers FA and FB of photosystem I (PSI); essential for photochemical activity. FB is the terminal electron acceptor of PSI, donating electrons to ferredoxin. The C-terminus interacts with PsaA/B/D and helps assemble the protein into the PSI complex. Required for binding of PsaD and PsaE to PSI. PSI is a plastocyanin/cytochrome c6-ferredoxin oxidoreductase, converting photonic excitation into a charge separation, which transfers an electron from the donor P700 chlorophyll pair to the spectroscopically characterized acceptors A0, A1, FX, FA and FB in turn. The polypeptide is Photosystem I iron-sulfur center (Prochlorococcus marinus (strain NATL2A)).